Reading from the N-terminus, the 207-residue chain is LexA repressor (207 aa).

Residues 28-48 constitute a DNA-binding region (H-T-H motif); it reads RAEIARRLGFKSPNAAEEHLK. Catalysis depends on for autocatalytic cleavage activity residues Ser-126 and Lys-163.

The protein belongs to the peptidase S24 family. As to quaternary structure, homodimer.

The enzyme catalyses Hydrolysis of Ala-|-Gly bond in repressor LexA.. Represses a number of genes involved in the response to DNA damage (SOS response), including recA and lexA. In the presence of single-stranded DNA, RecA interacts with LexA causing an autocatalytic cleavage which disrupts the DNA-binding part of LexA, leading to derepression of the SOS regulon and eventually DNA repair. This chain is LexA repressor, found in Marinomonas sp. (strain MWYL1).